We begin with the raw amino-acid sequence, 565 residues long: Urocanate hydratase (565 aa).

Residues 61–62 (GG), Q139, 185–187 (GMG), E205, R210, 251–252 (NA), 272–276 (QTSAH), 282–283 (YL), and Y331 each bind NAD(+). C419 is a catalytic residue. Positions 453 to 472 (LDSGSVSSPNRETESMKDGS) are disordered. Basic and acidic residues predominate over residues 463–472 (RETESMKDGS). G501 serves as a coordination point for NAD(+).

It belongs to the urocanase family. Requires NAD(+) as cofactor.

It localises to the cytoplasm. It catalyses the reaction 4-imidazolone-5-propanoate = trans-urocanate + H2O. The protein operates within amino-acid degradation; L-histidine degradation into L-glutamate; N-formimidoyl-L-glutamate from L-histidine: step 2/3. Functionally, catalyzes the conversion of urocanate to 4-imidazolone-5-propionate. In Pseudomonas syringae, this protein is Urocanate hydratase.